The following is a 492-amino-acid chain: Thyroid hormone receptor alpha (492 aa).

The tract at residues Met1–Cys33 is disordered. The tract at residues Met1–Gln52 is modulating. Residues Cys53, Cys56, Cys70, Cys73, Cys91, Cys97, Cys107, and Cys110 each coordinate Zn(2+). NR C4-type zinc fingers lie at residues Cys53–Cys73 and Cys91–Cys115. The nuclear receptor DNA-binding region spans Cys53–Asp127. The NR LBD domain maps to Glu163 to Val407. Residues Arg228 and Ser277 each contribute to the 3,3',5-triiodo-L-thyronine site. Residues Ala457 to Pro492 are disordered.

The protein belongs to the nuclear hormone receptor family. NR1 subfamily. As to quaternary structure, binds DNA as a dimer; homodimer and heterodimer with RXRB. Interacts with NCOA3 and NCOA6 coactivators, leading to a strong increase of transcription of target genes. Probably interacts with SFPQ. Interacts with C1D. Interacts with AKAP13. Interacts with TP53INP2. Interacts with PER2. Isoform alpha-2 and isoform alpha-1 interact with TACC1, but the interaction with alpha-1 is weaker. The interaction with isoform alpha-1, but not alpha-2, is decreased in the presence of thyroid hormone T3.

It is found in the nucleus. Its subcellular location is the cytoplasm. Nuclear hormone receptor that can act as a repressor or activator of transcription. High affinity receptor for thyroid hormones, including triiodothyronine and thyroxine. In Rattus norvegicus (Rat), this protein is Thyroid hormone receptor alpha (Thra).